The sequence spans 222 residues: Probable nicotinate-nucleotide adenylyltransferase (222 aa).

This sequence belongs to the NadD family.

It catalyses the reaction nicotinate beta-D-ribonucleotide + ATP + H(+) = deamido-NAD(+) + diphosphate. The protein operates within cofactor biosynthesis; NAD(+) biosynthesis; deamido-NAD(+) from nicotinate D-ribonucleotide: step 1/1. Functionally, catalyzes the reversible adenylation of nicotinate mononucleotide (NaMN) to nicotinic acid adenine dinucleotide (NaAD). The protein is Probable nicotinate-nucleotide adenylyltransferase of Stenotrophomonas maltophilia (strain K279a).